A 1074-amino-acid chain; its full sequence is Collagen, type I, alpha 1a (1074 aa).

The segment covering 1-13 (KSPAMPVPGPMGP) has biased composition (pro residues). Residues 1–1010 (KSPAMPVPGP…PQEKAPDPYR (1010 aa)) are disordered. The segment covering 14 to 36 (MGPRSGPQGFPGEAGAAGAMGPR) has biased composition (low complexity). Residues 45 to 59 (NGEDGESGKPGRGGE) show a composition bias toward basic and acidic residues. Low complexity predominate over residues 129-147 (TGAAGAAGARGNDGAAGAA). Residues 149 to 162 (PPGPTGPAGPPGFP) show a composition bias toward pro residues. Gly residues predominate over residues 163–181 (GGPGAKGDAGAQGGRGPEG). 3 stretches are compositionally biased toward low complexity: residues 182-225 (PAGA…AGAP), 234-272 (SGPQ…APGV), and 290-299 (EPGAAGARGA). Residues 301–313 (GERGGPGGRGFPG) are compositionally biased toward gly residues. Composition is skewed to low complexity over residues 377-392 (VGAR…PGPK), 469-530 (VPGE…QGMP), and 563-578 (RGLT…AGAT). Positions 588–597 (GPVGPGGARG) are enriched in gly residues. 2 stretches are compositionally biased toward low complexity: residues 611–647 (AGFA…AGPT) and 661–683 (PKGA…AGRV). Positions 685–697 (PPGPSGNPGPPGP) are enriched in pro residues. 2 stretches are compositionally biased toward low complexity: residues 715–742 (PAGR…SEGA) and 803–823 (PGLA…SEGS). A compositionally biased stretch (pro residues) spans 847–857 (APGPPGAPGPV). Positions 871 to 890 (PAGPAGSAGPAGPRGPAGAP) are enriched in low complexity. The segment covering 893–907 (RGDKGESGEAGERGH) has biased composition (basic and acidic residues). Over residues 920-956 (SGSSGEQGPAGAAGPAGPRGPAGSAGSPGKDGMSGLP) the composition is skewed to low complexity. Residues 974–986 (AGPPGPPGPPGAP) show a composition bias toward pro residues. In terms of domain architecture, Fibrillar collagen NC1 spans 1014–1074 (LEVDSTLKSL…GLEVGPVCFL (61 aa)).

It belongs to the fibrillar collagen family.

Its subcellular location is the secreted. The protein localises to the extracellular space. The protein resides in the extracellular matrix. This is Collagen, type I, alpha 1a from Epinephelus marginatus (Dusky grouper).